A 359-amino-acid chain; its full sequence is Molybdenum import ATP-binding protein ModC (359 aa).

The region spanning 1–233 (MSGLTVSIRG…IDAESEGGGV (233 aa)) is the ABC transporter domain. An ATP-binding site is contributed by 32–39 (GHSGAGKT). Residues 289–355 (AISIRNLLPV…VKAVSVDRAA (67 aa)) enclose the Mop domain.

This sequence belongs to the ABC transporter superfamily. Molybdate importer (TC 3.A.1.8) family. The complex is composed of two ATP-binding proteins (ModC), two transmembrane proteins (ModB) and a solute-binding protein (ModA).

It localises to the cell inner membrane. It catalyses the reaction molybdate(out) + ATP + H2O = molybdate(in) + ADP + phosphate + H(+). Functionally, part of the ABC transporter complex ModABC involved in molybdenum import. Responsible for energy coupling to the transport system. This is Molybdenum import ATP-binding protein ModC from Brucella melitensis biotype 1 (strain ATCC 23456 / CCUG 17765 / NCTC 10094 / 16M).